A 129-amino-acid polypeptide reads, in one-letter code: Large ribosomal subunit protein bL19 (129 aa).

The protein belongs to the bacterial ribosomal protein bL19 family.

Its function is as follows. This protein is located at the 30S-50S ribosomal subunit interface and may play a role in the structure and function of the aminoacyl-tRNA binding site. The protein is Large ribosomal subunit protein bL19 of Burkholderia mallei (strain NCTC 10247).